We begin with the raw amino-acid sequence, 2605 residues long: Non-reducing polyketide synthase dbaI (2605 aa).

An N-terminal acylcarrier protein transacylase domain (SAT) region spans residues 97 to 243 (PNTLLIPLVM…PASEISDLHR (147 aa)). Catalysis depends on Cys-144, which acts as the Nucleophile; for transacylase activity. Catalysis depends on His-262, which acts as the Proton donor/acceptor; for transacylase activity. A Ketosynthase family 3 (KS3) domain is found at 382 to 798 (ENDIAVVGMS…GSNASIVVTQ (417 aa)). Catalysis depends on for beta-ketoacyl synthase activity residues Cys-547, His-682, and His-721. The tract at residues 908–1195 (FGGQVSTFVG…VTNMASRALG (288 aa)) is malonyl-CoA:ACP transacylase (MAT) domain. Residues 1285 to 1420 (PNTLLTFVGY…GRVIFRSISD (136 aa)) form an N-terminal hotdog fold region. One can recognise a PKS/mFAS DH domain in the interval 1285–1596 (PNTLLTFVGY…YVKIPKASMS (312 aa)). The tract at residues 1316 to 1594 (LIRGHIIAQT…ISYVKIPKAS (279 aa)) is product template (PT) domain. Residue His-1320 is the Proton acceptor; for dehydratase activity of the active site. Residues 1447-1596 (EVDEVLQNRN…YVKIPKASMS (150 aa)) are C-terminal hotdog fold. The active-site Proton donor; for dehydratase activity is Asp-1504. A Carrier domain is found at 1665-1739 (GQLTQRIKSI…SLIKCVRKAM (75 aa)). Ser-1699 carries the post-translational modification O-(pantetheine 4'-phosphoryl)serine. A disordered region spans residues 1742–1780 (DADSAEYTTEQSTSEAADSDDKSTNYTTPSTPGEEALDM). Over residues 1747–1757 (EYTTEQSTSEA) the composition is skewed to polar residues. The methyltransferase domain stretch occupies residues 1963 to 2151 (DWPLNRLFYR…VGYGHVDWTD (189 aa)). The interval 2230–2473 (VTGATGSLGC…LSWTPVDVVA (244 aa)) is NADPH-binding (R) domain.

It catalyses the reaction 4 malonyl-CoA + acetyl-CoA + AH2 + S-adenosyl-L-methionine + 3 H(+) = 2,4-dihydroxy-3-methyl-6-(2-oxopropyl)benzaldehyde + A + S-adenosyl-L-homocysteine + 4 CO2 + 5 CoA + H2O. It functions in the pathway secondary metabolite biosynthesis. In terms of biological role, non-reducing polyketide synthase; part of the gene cluster that mediates the biosynthesis of the antibiotic 2,4-dihydroxy-3-methyl-6-(2-oxopropyl)benzaldehyde (DHMBA) and its derivatives. The direct non-reducing polyketide synthase dbaI product is 2,4-dihydroxy-3-methyl-6-(2-oxopropyl)benzaldehyde (DHMBA), produced by condensation of one acetyl-CoA starter unit with 4 malonyl-CoA units and one methylation step. The FAD-dependent monooxygenase dbaH is responsible for the synthesis of yellow pigments derived from the oxidation of DHMBA. The roles of dbaB, C, E and F have still to be determined. The polypeptide is Non-reducing polyketide synthase dbaI (Emericella nidulans (strain FGSC A4 / ATCC 38163 / CBS 112.46 / NRRL 194 / M139) (Aspergillus nidulans)).